Reading from the N-terminus, the 119-residue chain is Large ribosomal subunit protein bL19 (119 aa).

This sequence belongs to the bacterial ribosomal protein bL19 family.

Its function is as follows. This protein is located at the 30S-50S ribosomal subunit interface and may play a role in the structure and function of the aminoacyl-tRNA binding site. In Pelobacter propionicus (strain DSM 2379 / NBRC 103807 / OttBd1), this protein is Large ribosomal subunit protein bL19.